Here is a 212-residue protein sequence, read N- to C-terminus: Superoxide dismutase [Fe] 1, chloroplastic (212 aa).

A2 is modified (N-acetylalanine). Positions 35, 87, 169, and 173 each coordinate Fe cation.

Belongs to the iron/manganese superoxide dismutase family. In terms of assembly, homodimer. Interacts with cpn20/cpn21. The cofactor is Fe cation.

It localises to the cell membrane. It is found in the plastid. The protein localises to the chloroplast membrane. The protein resides in the chloroplast stroma. The enzyme catalyses 2 superoxide + 2 H(+) = H2O2 + O2. Its activity is regulated as follows. Activated by cpn20/cpn21. In terms of biological role, destroys superoxide anion radicals which are normally produced within the cells and which are toxic to biological systems. This is Superoxide dismutase [Fe] 1, chloroplastic (FSD1) from Arabidopsis thaliana (Mouse-ear cress).